Here is a 288-residue protein sequence, read N- to C-terminus: Ankyrin repeat and SOCS box protein 8 (288 aa).

Phosphoserine is present on Ser-17. ANK repeat units lie at residues 52-81 (GTLK…EVNA), 85-113 (YNRT…NPNA), 117-146 (NRDT…SVNA), and 150-179 (NNDT…EVRV). The region spanning 235 to 288 (QLCEKLTVLCSAPGTLKTLARYAVRRSLGLQYLPDAVKGLPLPASLKEYLLLLE) is the SOCS box domain.

Belongs to the ankyrin SOCS box (ASB) family. In terms of assembly, interacts with TBK1; this interaction promotes TBK1 proteasomal degradation. Post-translationally, phosphorylated by TBK1.

Its subcellular location is the cytoplasm. The protein operates within protein modification; protein ubiquitination. Functionally, may be a substrate-recognition component of a SCF-like ECS (Elongin-Cullin-SOCS-box protein) E3 ubiquitin-protein ligase complex which mediates the ubiquitination and subsequent proteasomal degradation of target proteins. Inhibits IFN-beta production through the IRF3 signaling pathway by targeting TBK1 via 'Lys-48'-linked ubiquitination, leading to its proteasomal degradation. The polypeptide is Ankyrin repeat and SOCS box protein 8 (ASB8) (Macaca fascicularis (Crab-eating macaque)).